The primary structure comprises 421 residues: Periplasmic [Fe] hydrogenase large subunit (421 aa).

2 4Fe-4S ferredoxin-type domains span residues 26 to 57 and 59 to 86; these read HFVQIDEAKCIGCDTCSQYCPTAAIFGEMGEP and SIPHIEACINCGQCLTHCPENAIYEAQS. Residues cysteine 35, cysteine 38, cysteine 41, cysteine 45, cysteine 66, cysteine 69, cysteine 72, cysteine 76, cysteine 179, cysteine 234, cysteine 378, and cysteine 382 each contribute to the [4Fe-4S] cluster site. Cysteine 382 is a binding site for Fe(2+).

Heterodimer of a large and a small subunit. [4Fe-4S] cluster serves as cofactor. Fe(2+) is required as a cofactor.

The protein localises to the periplasm. The catalysed reaction is H2 + 2 oxidized [2Fe-2S]-[ferredoxin] = 2 reduced [2Fe-2S]-[ferredoxin] + 2 H(+). Functionally, may be involved in hydrogen uptake for the reduction of sulfate to hydrogen sulfide in an electron transport chain. Cytochrome c3 is likely to be the physiological electron carrier for the enzyme. The chain is Periplasmic [Fe] hydrogenase large subunit (hydA) from Nitratidesulfovibrio vulgaris (strain ATCC 29579 / DSM 644 / CCUG 34227 / NCIMB 8303 / VKM B-1760 / Hildenborough) (Desulfovibrio vulgaris).